Here is a 465-residue protein sequence, read N- to C-terminus: Cysteine--tRNA ligase (465 aa).

C30 contributes to the Zn(2+) binding site. A 'HIGH' region motif is present at residues I32 to H42. Zn(2+)-binding residues include C214, H239, and E243. Residues K271–S275 carry the 'KMSKS' region motif. K274 contacts ATP.

It belongs to the class-I aminoacyl-tRNA synthetase family. In terms of assembly, monomer. Zn(2+) serves as cofactor.

It localises to the cytoplasm. The catalysed reaction is tRNA(Cys) + L-cysteine + ATP = L-cysteinyl-tRNA(Cys) + AMP + diphosphate. The protein is Cysteine--tRNA ligase of Burkholderia multivorans (strain ATCC 17616 / 249).